We begin with the raw amino-acid sequence, 193 residues long: Xanthine phosphoribosyltransferase (193 aa).

Xanthine-binding residues include Leu-20 and Thr-27. 5-phospho-alpha-D-ribose 1-diphosphate is bound at residue Ala-128–Ala-132. Lys-156 contributes to the xanthine binding site.

This sequence belongs to the purine/pyrimidine phosphoribosyltransferase family. Xpt subfamily. In terms of assembly, homodimer.

It localises to the cytoplasm. It catalyses the reaction XMP + diphosphate = xanthine + 5-phospho-alpha-D-ribose 1-diphosphate. Its pathway is purine metabolism; XMP biosynthesis via salvage pathway; XMP from xanthine: step 1/1. Its function is as follows. Converts the preformed base xanthine, a product of nucleic acid breakdown, to xanthosine 5'-monophosphate (XMP), so it can be reused for RNA or DNA synthesis. The polypeptide is Xanthine phosphoribosyltransferase (Streptococcus pyogenes serotype M5 (strain Manfredo)).